Consider the following 263-residue polypeptide: Tryptophan synthase alpha chain (263 aa).

Catalysis depends on proton acceptor residues glutamate 49 and aspartate 60.

Belongs to the TrpA family. As to quaternary structure, tetramer of two alpha and two beta chains.

It catalyses the reaction (1S,2R)-1-C-(indol-3-yl)glycerol 3-phosphate + L-serine = D-glyceraldehyde 3-phosphate + L-tryptophan + H2O. It functions in the pathway amino-acid biosynthesis; L-tryptophan biosynthesis; L-tryptophan from chorismate: step 5/5. In terms of biological role, the alpha subunit is responsible for the aldol cleavage of indoleglycerol phosphate to indole and glyceraldehyde 3-phosphate. The protein is Tryptophan synthase alpha chain of Cereibacter sphaeroides (strain ATCC 17029 / ATH 2.4.9) (Rhodobacter sphaeroides).